The chain runs to 61 residues: Phospholipase A2 (61 aa).

Residues tyrosine 27, glycine 29, and glycine 31 each contribute to the Ca(2+) site. A disulfide bridge connects residues cysteine 28 and cysteine 35. Histidine 38 is a catalytic residue. Aspartate 39 is a binding site for Ca(2+). Cysteines 41 and 59 form a disulfide. Aspartate 60 is a catalytic residue.

Belongs to the phospholipase A2 family. Group II subfamily. D49 sub-subfamily. In terms of assembly, homodimer. The cofactor is Ca(2+). In terms of tissue distribution, expressed by the venom gland.

It localises to the secreted. It carries out the reaction a 1,2-diacyl-sn-glycero-3-phosphocholine + H2O = a 1-acyl-sn-glycero-3-phosphocholine + a fatty acid + H(+). In terms of biological role, snake venom phospholipase A2 (PLA2) that displays edema-inducing activities. PLA2 catalyzes the calcium-dependent hydrolysis of the 2-acyl groups in 3-sn-phosphoglycerides. The protein is Phospholipase A2 of Crotalus atrox (Western diamondback rattlesnake).